Reading from the N-terminus, the 286-residue chain is L-cysteine S-thiosulfotransferase subunit SoxA (286 aa).

A signal peptide spans 1–28; sequence MKKTIQRGLFTGALVLLTAMTSKPAHAA. A disulfide bridge connects residues cysteine 106 and cysteine 137. The region spanning 180–286 is the Cytochrome c domain; sequence DAYMKGKEMF…LKFNGPASRK (107 aa). Heme-binding residues include cysteine 200 and histidine 204. Arginine 243 is a binding site for substrate. Cysteine 247 contacts heme. The active-site Cysteine persulfide intermediate is cysteine 247.

Belongs to the SoxA family. In terms of assembly, heterodimer of SoxA and SoxX. The SoxAX complex interacts with CT1020, SoxAX-binding protein SaxB (SoxK); this interaction stimulates catalytic activity of the complex. Heme is required as a cofactor. Cysteine persulfide at Cys-247.

It localises to the periplasm. The catalysed reaction is L-cysteinyl-[SoxY protein] + thiosulfate + 2 Fe(III)-[cytochrome c] = S-sulfosulfanyl-L-cysteinyl-[SoxY protein] + 2 Fe(II)-[cytochrome c] + 2 H(+). It catalyses the reaction S-sulfanyl-L-cysteinyl-[SoxY protein] + thiosulfate + 2 Fe(III)-[cytochrome c] = S-(2-sulfodisulfanyl)-L-cysteinyl-[SoxY protein] + 2 Fe(II)-[cytochrome c] + 2 H(+). Functionally, C-type monoheme cytochrome, which is part of the SoxAX cytochrome complex involved in sulfur oxidation. The SoxAX complex catalyzes the formation of a heterodisulfide bond between the conserved cysteine residue on a sulfur carrier SoxYZ complex subunit SoxY and thiosulfate or other inorganic sulfur substrates. This leads to the liberation of two electrons, which may be transferred from the SoxAX complex to another cytochrome c and which then may be used for reductive CO(2) fixation. The polypeptide is L-cysteine S-thiosulfotransferase subunit SoxA (Chlorobaculum thiosulfatiphilum (Chlorobium limicola f.sp. thiosulfatophilum)).